The primary structure comprises 1118 residues: Sodium-driven chloride bicarbonate exchanger (1118 aa).

Disordered stretches follow at residues 1–23 (MEIK…EEAV), 58–96 (GRKS…DTPS), 245–312 (KQSE…PPHQ), and 457–476 (NGTA…GPEL). Residues 1 to 509 (MEIKDQGAQM…DFRDAFSLQC (509 aa)) are Cytoplasmic-facing. The segment covering 59–76 (RKSHRRHRHRGHKHRKRD) has biased composition (basic residues). Residues 77–90 (RERDSGLEDGRESP) are compositionally biased toward basic and acidic residues. Residue Ser89 is modified to Phosphoserine. Thr94 carries the post-translational modification Phosphothreonine. The segment covering 248–264 (EPNSMDKNAGQVVSPQS) has biased composition (polar residues). Ser276 is modified (phosphoserine). Residues 510–530 (LASFLFLYCACMSPVITFGGL) traverse the membrane as a helical segment. Residues 531–538 (LGEATEGR) are Extracellular-facing. Residues 539–559 (ISAIESLFGASMTGIAYSLFG) form a helical membrane-spanning segment. The Cytoplasmic segment spans residues 560–562 (GQP). Residues 563 to 583 (LTILGSTGPVLVFEKILFKFC) form a helical membrane-spanning segment. At 584 to 596 (KEYGLSYLSLRAS) the chain is on the extracellular side. Residues 597–617 (IGLWTATLCIILVATDASSLV) traverse the membrane as a helical segment. Residues 618-626 (CYITRFTEE) lie on the Cytoplasmic side of the membrane. Residues 627 to 647 (AFASLICIIFIYEALEKLFEL) traverse the membrane as a helical segment. Residues 648-720 (SEAYPINMHN…VGRACGHDHP (73 aa)) are Extracellular-facing. 4 N-linked (GlcNAc...) asparagine glycosylation sites follow: Asn674, Asn677, Asn687, and Asn697. A helical transmembrane segment spans residues 721–741 (YVPDVLFWSVILFFSTVTLSA). Residues 742-762 (TLKQFKTSRYFPTKVRSIVSD) lie on the Cytoplasmic side of the membrane. The chain crosses the membrane as a helical span at residues 763 to 783 (FAVFLTILCMVLIDYAIGIPS). Topologically, residues 784–809 (PKLQVPSVFKPTRDDRGWFVTPLGPN) are extracellular. The chain crosses the membrane as a helical span at residues 810 to 830 (PWWTVIAAIIPALLCTILIFM). At 831–855 (DQQITAVIINRKEHKLKKGCGYHLD) the chain is on the cytoplasmic side. The chain crosses the membrane as a helical span at residues 856 to 876 (LLMVAVMLGVCSIMGLPWFVA). Topologically, residues 877-912 (ATVLSITHVNSLKLESECSAPGEQPKFLGIREQRVT) are extracellular. A helical transmembrane segment spans residues 913–933 (GLMIFILMGSSVFMTSILKFI). Topologically, residues 934–935 (PM) are cytoplasmic. The helical transmembrane segment at 936–956 (PVLYGVFLYMGASSLKGIQFF) threads the bilayer. The Extracellular segment spans residues 957–998 (DRIKLFWMPAKHQPDFIYLRHVPLRKVHLFTIIQMSCLGLLW). The helical transmembrane segment at 999–1019 (IIKVSRAAIVFPMMVLALVFV) threads the bilayer. Residues 1020 to 1118 (RKLMDLLFTK…SSFPSKSSPS (99 aa)) are Cytoplasmic-facing. Residues Ser1057 and Ser1085 each carry the phosphoserine modification.

Belongs to the anion exchanger (TC 2.A.31) family. As to expression, predominantly expressed in the brain.

The protein localises to the basolateral cell membrane. It localises to the apical cell membrane. Its subcellular location is the cell projection. It is found in the dendrite. The protein resides in the axon. The protein localises to the perikaryon. It localises to the presynapse. Its subcellular location is the postsynapse. The enzyme catalyses 2 hydrogencarbonate(out) + chloride(in) + Na(+)(out) = 2 hydrogencarbonate(in) + chloride(out) + Na(+)(in). In terms of biological role, sodium/bicarbonate cotransporter which plays an important role in regulating intracellular pH. Has been shown to act as a sodium/bicarbonate cotransporter in exchange for intracellular chloride. Has also been shown to act as a sodium/biocarbonate cotransporter which does not couple net influx of bicarbonate to net efflux of chloride, with the observed chloride efflux being due to chloride self-exchange. Controls neuronal pH and may contribute to the secretion of cerebrospinal fluid. Acting on presynaptic intracellular pH, it promotes GABA release, reduces the excitability of CA1 pyramidal neurons, and modulates short-term synaptic plasticity. Required in retinal cells to maintain normal pH which is necessary for normal vision. In the kidney, likely to mediate bicarbonate reclamation in the apical membrane of the proximal tubules. The polypeptide is Sodium-driven chloride bicarbonate exchanger (Homo sapiens (Human)).